The following is a 456-amino-acid chain: Probable polygalacturonase At3g15720 (456 aa).

The N-terminal stretch at 1 to 23 is a signal peptide; sequence MKKKTWFLNFSLFFLQIFTSSNA. PbH1 repeat units lie at residues 169–195, 196–217, 219–239, 249–270, 278–299, and 314–341; these read CNYVTISSLRINAPESSPNTDGIDVGA, SSNVVIQDCIIATGDDCIAINS, TSNIHISGIDCGPGHGISIGS, VENVCVQNCNFRGTMNGARIKT, ARMITFNGITLDNVENPIIIDQ, and SSAVEVSKVVFSNFIGTSKSEYGVDFRC. The active-site Proton donor is Asp210. Residue His233 is part of the active site.

This sequence belongs to the glycosyl hydrolase 28 family.

Its subcellular location is the secreted. It localises to the cell wall. The catalysed reaction is (1,4-alpha-D-galacturonosyl)n+m + H2O = (1,4-alpha-D-galacturonosyl)n + (1,4-alpha-D-galacturonosyl)m.. This Arabidopsis thaliana (Mouse-ear cress) protein is Probable polygalacturonase At3g15720.